The primary structure comprises 2039 residues: MDIVDTFNHLIPTEHLDDALFLGSNLENEVCEDFSASQNVLEDSLKNMLSDKDPMLGSASNQFCLPVLDSNDPNFQMPCSTVVGLDDIMDEGVVKESGNDTIDEEELILPNRNLRDKVEENSVRSPRKSPRLMAQEQVRSLRQSTIAKRSNAAPLSNTKKASGKTVSTAKAGVKQPERSQVKEEVCMSLKPEYHKENRRCSRNSGQIEVVPEVSVSSSHSSVSSCLEMKDEDGLDSKHKCNNPGEIDVPSHELNCSLLSETCVTIGEKKNEALMECKAKPVGSPLFKFSDKEEHEQNDSISGKTGETVVEEMIATRKVEQDSKETVKLSHEDDHILEDAGSSDISSDAACTNPNKTENSLVGLPSCVDEVTECNLELKDTMGIADKTENTLERNKIEPLGYCEDAESNRQLESTEFNKSNLEVVDTSTFGPESNILENAICDVPDQNSKQLNAIESTKIESHETANLQDDRNSQSSSVSYLESKSVKSKHTKPVIHSKQNMTTDAPKKIVAAKYEVIHSKTKVNVKSVKRNTDVPESQQNFHRPVKVRKKQIDKEPKIQSCNSGVKSVKNQAHSVLKKTLQDQTLVQIFKPLTHSLSDKSHAHPGCLKEPHHPAQTGHVSHSSQKQCHKPQQQAPAMKTNSHVKEELEHPGVEHFKEEDKLKLKKPEKNLQPRQRRSSKSFSLDEPPLFIPDNIATIRREGSDHSSSFESKYMWTPSKQCGFCKKPHGNRFMVGCGRCDDWFHGDCVGLSLSQAQQMGEEDKEYVCVKCCAEEDKKTEILDPDTLENQATVEFHSGDKTMECEKLGLSKHTTNDRTKYIDDTVKHKVKILKRESGEGRNSSDCRDNEIKKWQLAPLRKMGQPVLPRRSSEEKSEKIPKESTTVTCTGEKASKPGTHEKQEMKKKKVEKGVLNVHPAASASKPSADQIRQSVRHSLKDILMKRLTDSNLKVPEEKAAKVATKIEKELFSFFRDTDAKYKNKYRSLMFNLKDPKNNILFKKVLKGEVTPDHLIRMSPEELASKELAAWRRRENRHTIEMIEKEQREVERRPITKITHKGEIEIESDAPMKEQEAAMEIQEPAANKSLEKPEGSEKQKEEVDSMSKDTTSQHRQHLFDLNCKICIGRMAPPVDDLSPKKVKVVVGVARKHSDNEAESIADALSSTSNILASEFFEEEKQESPKSTFSPAPRPEMPGTVEVESTFLARLNFIWKGFINMPSVAKFVTKAYPVSGSPEYLTEDLPDSIQVGGRISPQTVWDYVEKIKASGTKEICVVRFTPVTEEDQISYTLLFAYFSSRKRYGVAANNMKQVKDMYLIPLGATDKIPHPLVPFDGPGLELHRPNLLLGLIIRQKLKRQHSACASTSHIAETPESAPPIALPPDKKSKIEVSTEEAPEEENDFFNSFTTVLHKQRNKPQQNLQEDLPTAVEPLMEVTKQEPPKPLRFLPGVLIGWENQPTTLELANKPLPVDDILQSLLGTTGQVYDQAQSVMEQNTVKEIPFLNEQTNSKIEKTDNVEVTDGENKEIKVKVDNISESTDKSAEIETSVVGSSSISAGSLTSLSLRGKPPDVSTEAFLTNLSIQSKQEETVESKEKTLKRQLQEDQENNLQDNQTSNSSPCRSNVGKGNIDGNVSCSENLVANTARSPQFINLKRDPRQAAGRSQPVTTSESKDGDSCRNGEKHMLPGLSHNKEHLTEQINVEEKLCSAEKNSCVQQSDNLKVAQNSPSVENIQTSQAEQAKPLQEDILMQNIETVHPFRRGSAVATSHFEVGNTCPSEFPSKSITFTSRSTSPRTSTNFSPMRPQQPNLQHLKSSPPGFPFPGPPNFPPQSMFGFPPHLPPPLLPPPGFGFAQNPMVPWPPVVHLPGQPQRMMGPLSQASRYIGPQNFYQVKDIRRPERRHSDPWGRQDQQQLDRPFNRGKGDRQRFYSDSHHLKRERHEKEWEQESERHRRRDRSQDKDRDRKSREEGHKDKERARLSHGDRGTDGKASRDSRNVDKKPDKPKSEDYEKDKEREKSKHREGEKDRDRYHKDRDHTDRTKSKR.

Phosphoserine is present on residues S97 and S125. A compositionally biased stretch (polar residues) spans S144–T168. The tract at residues S144–R178 is disordered. Phosphoserine is present on residues S283 and S299. A compositionally biased stretch (basic and acidic residues) spans E460–N472. Disordered stretches follow at residues E460–K492, V528–E555, and L596–E685. Residues S473–S483 are compositionally biased toward low complexity. A compositionally biased stretch (basic and acidic residues) spans L596 to H612. Positions G617 to N640 are enriched in polar residues. Residues H642 to L670 are compositionally biased toward basic and acidic residues. K644 participates in a covalent cross-link: Glycyl lysine isopeptide (Lys-Gly) (interchain with G-Cter in SUMO2). Residue S680 is modified to Phosphoserine. The segment at S717–E772 adopts a PHD-type zinc-finger fold. The interval G860–K904 is disordered. Basic and acidic residues-rich tracts occupy residues R867–K878 and K889–E900. Positions I927 to E1046 constitute a TFIIS central domain. Residue K964 forms a Glycyl lysine isopeptide (Lys-Gly) (interchain with G-Cter in SUMO2) linkage. At S1014 the chain carries Phosphoserine. Residues E1078–H1109 form a disordered region. The segment covering S1084–S1102 has biased composition (basic and acidic residues). 3 positions are modified to phosphoserine: S1133, S1148, and S1178. 3 disordered regions span residues F1171–M1191, S1360–K1380, and K1581–G1623. Residues K1581–Q1598 are compositionally biased toward basic and acidic residues. Residues S1614 and S1642 each carry the phosphoserine modification. 2 disordered regions span residues P1643–L1684 and P1776–P1800. Over residues E1666–L1684 the composition is skewed to basic and acidic residues. Residues T1781–P1797 show a composition bias toward low complexity. Residues R1867 and R1877 each carry the asymmetric dimethylarginine modification. Positions F1884–R2039 are disordered. 2 stretches are compositionally biased toward basic and acidic residues: residues K1888 to G1902 and P1912 to R2039. Phosphoserine is present on residues S1898 and S1925. K1931 participates in a covalent cross-link: Glycyl lysine isopeptide (Lys-Gly) (interchain with G-Cter in SUMO2).

As to expression, ubiquitous. Expression is significantly reduced or lost in glioblastomas, glioblastoma cell lines, anaplastic astrocytomas, and astrocytomas.

This Homo sapiens (Human) protein is PHD finger protein 3 (PHF3).